We begin with the raw amino-acid sequence, 278 residues long: Undecaprenyl-diphosphatase (278 aa).

6 helical membrane-spanning segments follow: residues 49-69 (ANTF…VVFW), 97-117 (HVLI…DFID), 120-140 (LFSI…MIAA), 197-217 (ADFT…LSLV), 226-246 (GDLG…LLSI), and 258-278 (LVPF…IVYM).

It belongs to the UppP family.

The protein localises to the cell membrane. The catalysed reaction is di-trans,octa-cis-undecaprenyl diphosphate + H2O = di-trans,octa-cis-undecaprenyl phosphate + phosphate + H(+). In terms of biological role, catalyzes the dephosphorylation of undecaprenyl diphosphate (UPP). Confers resistance to bacitracin. This Exiguobacterium sibiricum (strain DSM 17290 / CCUG 55495 / CIP 109462 / JCM 13490 / 255-15) protein is Undecaprenyl-diphosphatase.